A 104-amino-acid polypeptide reads, in one-letter code: L-rhamnose mutarotase (104 aa).

Tyr-18 lines the substrate pocket. His-22 functions as the Proton donor in the catalytic mechanism. Residues Tyr-41 and 76-77 (WW) each bind substrate.

This sequence belongs to the rhamnose mutarotase family. As to quaternary structure, homodimer.

The protein resides in the cytoplasm. It catalyses the reaction alpha-L-rhamnose = beta-L-rhamnose. It participates in carbohydrate metabolism; L-rhamnose metabolism. Functionally, involved in the anomeric conversion of L-rhamnose. The sequence is that of L-rhamnose mutarotase from Klebsiella pneumoniae (strain 342).